The sequence spans 276 residues: MHPAAEDSPLGKSSEYLDTYTPSLLFPIPRAPKWAELGLAAENLPYRGVDVWNCYELSWLLPSGKPVVAVGEFVIPADSPNIVESKSFKLYLNSLNQTVFADREALRQTLARDLSAATGAPVAVRLRSLGEVQEQGVAALPGQCIDELDVTIGRYGQPSAELLRCDPARRVEQVLHSHLLKSNCPVTGQPDWGSLVVDYHGPALDPASLLAYVVSFRQHADFHEQCVERIFLDLLRLLEPGRLTVYARYVRRGGLDINPWRSTGAVVADNRRLARQ.

83-85 contributes to the substrate binding site; it reads VES. 85–86 provides a ligand contact to NADPH; sequence SK. C184 acts as the Thioimide intermediate in catalysis. The Proton donor role is filled by D191. Residue 223 to 224 coordinates substrate; that stretch reads HE. 252 to 253 is an NADPH binding site; that stretch reads RG.

Belongs to the GTP cyclohydrolase I family. QueF type 2 subfamily. As to quaternary structure, homodimer.

The protein resides in the cytoplasm. It carries out the reaction 7-aminomethyl-7-carbaguanine + 2 NADP(+) = 7-cyano-7-deazaguanine + 2 NADPH + 3 H(+). It participates in tRNA modification; tRNA-queuosine biosynthesis. Catalyzes the NADPH-dependent reduction of 7-cyano-7-deazaguanine (preQ0) to 7-aminomethyl-7-deazaguanine (preQ1). The polypeptide is NADPH-dependent 7-cyano-7-deazaguanine reductase (Azotobacter vinelandii (strain DJ / ATCC BAA-1303)).